A 51-amino-acid chain; its full sequence is Epididymal sperm protein E (51 aa).

A zinc finger lies at 8 to 39 (CVRCRRKTPSFNSKTVTFRNKRRAIRSHCAYC).

In terms of tissue distribution, sperm.

Its subcellular location is the nucleus. The protein is Epididymal sperm protein E of Sepia officinalis (Common cuttlefish).